We begin with the raw amino-acid sequence, 54 residues long: Putative ATP synthase subunit epsilon, mitochondrial (54 aa).

It belongs to the eukaryotic ATPase epsilon family. F-type ATPases have 2 components, CF(1) - the catalytic core - and CF(0) - the membrane proton channel. CF(1) has five subunits: alpha(3), beta(3), gamma(1), delta(1), epsilon(1). CF(0) seems to have nine subunits: a, b, c, d, e, f, g, F6 and 8 (or A6L).

The protein resides in the mitochondrion. It localises to the mitochondrion inner membrane. Mitochondrial membrane ATP synthase (F(1)F(0) ATP synthase or Complex V) produces ATP from ADP in the presence of a proton gradient across the membrane which is generated by electron transport complexes of the respiratory chain. F-type ATPases consist of two structural domains, F(1) - containing the extramembraneous catalytic core, and F(0) - containing the membrane proton channel, linked together by a central stalk and a peripheral stalk. During catalysis, ATP synthesis in the catalytic domain of F(1) is coupled via a rotary mechanism of the central stalk subunits to proton translocation. Part of the complex F(1) domain and of the central stalk which is part of the complex rotary element. Rotation of the central stalk against the surrounding alpha(3)beta(3) subunits leads to hydrolysis of ATP in three separate catalytic sites on the beta subunits. This Caenorhabditis elegans protein is Putative ATP synthase subunit epsilon, mitochondrial.